Consider the following 301-residue polypeptide: Probable alpha-L-glutamate ligase (301 aa).

The ATP-grasp domain occupies 104 to 287 (LQLLSRRGIG…VAGIIIEHIE (184 aa)). ATP-binding positions include Lys-141, 178–179 (EY), Asp-187, and 211–213 (RSN). 3 residues coordinate Mg(2+): Asp-248, Glu-260, and Asn-262. The Mn(2+) site is built by Asp-248, Glu-260, and Asn-262.

This sequence belongs to the RimK family. The cofactor is Mg(2+). Mn(2+) is required as a cofactor.

The sequence is that of Probable alpha-L-glutamate ligase from Pseudomonas fluorescens (strain ATCC BAA-477 / NRRL B-23932 / Pf-5).